The primary structure comprises 899 residues: UPF0182 protein Mhun_1303 (899 aa).

7 consecutive transmembrane segments (helical) span residues 6–26 (LLIF…DLLS), 39–59 (VFLT…LLFF), 93–113 (VAAG…LAFL), 136–156 (LPFY…TLII), 196–216 (FLPQ…AFLW), 240–260 (ITIP…LLFL), and 271–291 (IAYG…AGFL).

It belongs to the UPF0182 family.

The protein resides in the cell membrane. This is UPF0182 protein Mhun_1303 from Methanospirillum hungatei JF-1 (strain ATCC 27890 / DSM 864 / NBRC 100397 / JF-1).